The sequence spans 95 residues: MLHTLHRSPWLTDFAALLRLLSEGDELLLLQDGVTAAVDGNRYLESLRNAPIKVYALNEDLIARGLTGQISNDIIPIDYTDFVRLTVKHSSQMAW.

Belongs to the DsrH/TusB family. As to quaternary structure, heterohexamer, formed by a dimer of trimers. The hexameric TusBCD complex contains 2 copies each of TusB, TusC and TusD. The TusBCD complex interacts with TusE.

The protein localises to the cytoplasm. In terms of biological role, part of a sulfur-relay system required for 2-thiolation of 5-methylaminomethyl-2-thiouridine (mnm(5)s(2)U) at tRNA wobble positions. The protein is Protein TusB of Escherichia coli O139:H28 (strain E24377A / ETEC).